Reading from the N-terminus, the 1267-residue chain is Ankyrin repeat and ELMO domain-containing protein D (1267 aa).

One can recognise an ELMO domain in the interval 307-466; sequence SHQRLLETLW…FVSGLASEVL (160 aa). Residues 486-496 show a composition bias toward basic and acidic residues; it reads KKKEKKSEKRG. Positions 486–598 are disordered; it reads KKKEKKSEKR…NNHILNNNHL (113 aa). Over residues 507 to 598 the composition is skewed to low complexity; that stretch reads GSNGNINSTT…NNHILNNNHL (92 aa). 4 ANK repeats span residues 655–685, 689–718, 767–796, and 801–830; these read DGNS…FLNT, QGLT…DPFI, TLET…NINN, and SGQN…DPSI. 4 disordered regions span residues 854-908, 924-1040, 1057-1082, and 1103-1215; these read NPTK…NSTS, TSIN…SPIF, SPTQ…NGAE, and ENLT…PPKD. Low complexity-rich tracts occupy residues 859 to 870, 895 to 908, and 924 to 1033; these read SRSTSSTSSSTS, ITNN…NSTS, and TSIN…STSP. Positions 1057 to 1080 are enriched in polar residues; sequence SPTQESPQVISTPTSPPYLSNNNG. Low complexity-rich tracts occupy residues 1108 to 1176 and 1184 to 1213; these read NSGN…IGSH and HNGP…VTPP.

In Dictyostelium discoideum (Social amoeba), this protein is Ankyrin repeat and ELMO domain-containing protein D (elmoD).